Reading from the N-terminus, the 356-residue chain is Thrombomodulin (356 aa).

At 1-296 (RGARGETEGR…SPAPAGPLHS (296 aa)) the chain is on the extracellular side. 2 consecutive EGF-like domains span residues 17 to 57 (GAWA…RSCG) and 60 to 98 (AEHPCHQLCEHFCHLHGLGNYTCICEAGYQLAADQHRCE). 18 disulfides stabilise this stretch: cysteine 21–cysteine 32, cysteine 28–cysteine 41, cysteine 43–cysteine 56, cysteine 64–cysteine 72, cysteine 68–cysteine 82, cysteine 84–cysteine 97, cysteine 103–cysteine 114, cysteine 110–cysteine 123, cysteine 125–cysteine 136, cysteine 143–cysteine 152, cysteine 148–cysteine 162, cysteine 164–cysteine 178, cysteine 182–cysteine 191, cysteine 187–cysteine 199, cysteine 201–cysteine 213, cysteine 219–cysteine 228, cysteine 224–cysteine 237, and cysteine 239–cysteine 253. One can recognise an EGF-like 3; calcium-binding domain in the interval 99–137 (DVDDCAQLPSPCPQRCVNTEGGFQCHCDTGYELVDGECV). EGF-like domains are found at residues 139–179 (PVDP…HKCQ) and 178–214 (CQMFCNQTSCPADCDPHYPTICRCPEGYIIDEGSTCT). The region spanning 215-254 (DINECDTNICPGQCHNLPGTYECICGPDSALSGQIGIDCD) is the EGF-like 6; calcium-binding domain. The segment at 255 to 290 (PTQVNEERGTPEDYGGSGEPPVSPTPGATARPSPAP) is disordered. Serine 271 is a glycosylation site (O-linked (Xyl...) (chondroitin sulfate) serine). Residues 297 to 320 (GVLVGISIASLSLVVALLALLCHL) form a helical membrane-spanning segment. Residues 321–356 (RKKQGASRGELEYKCGVPAKELMLQQVKTERTPQKL) lie on the Cytoplasmic side of the membrane.

As to quaternary structure, interacts with ITGAL, ITGAM and ITGB2. Interacts with thrombin/F2; this interaction switches the specificity of thrombin from a procoagulant to an anticoagulant and antifibrinolytic protease. Interacts with ANGP1 and ANGP2; these interactions significantly inhibit the generation of activated PC and TAFIa/CPB2 by the thrombin/thrombomodulin complex. Interacts with PF4; this interaction enhances generation of activated protein C. Interacts with HMGB1; this interaction inhibits HMGB1 inflammatory activity. As to expression, endothelial cells are unique in synthesizing thrombomodulin.

It localises to the membrane. Its function is as follows. Endothelial cell receptor that plays a critical role in regulating several physiological processes including hemostasis, coagulation, fibrinolysis, inflammation, and angiogenesis. Acts as a cofactor for thrombin activation of protein C/PROC on the surface of vascular endothelial cells leading to initiation of the activated protein C anticoagulant pathway. Also accelerates the activation of the plasma carboxypeptidase B2/CPB2, which catalyzes removal of C-terminal basic amino acids from its substrates including kinins or anaphylatoxins leading to fibrinolysis inhibition. Plays critical protective roles in changing the cleavage specificity of protease-activated receptor 1/PAR1, inhibiting endothelial cell permeability and inflammation. Suppresses inflammation distinctly from its anticoagulant cofactor activity by sequestering HMGB1 thereby preventing it from engaging cellular receptors such as RAGE and contributing to the inflammatory response. The chain is Thrombomodulin (THBD) from Bos taurus (Bovine).